Reading from the N-terminus, the 343-residue chain is Protease inhibitor Egf1.5a (343 aa).

The first 28 residues, methionine 1–alanine 28, serve as a signal peptide directing secretion. The 53-residue stretch at cysteine 52–cysteine 104 folds into the TIL domain.

The protein belongs to the polydnaviridae EGF-like motif protein family. As to quaternary structure, interacts with host PAP1, PAP3 and SPH2.

Its function is as follows. Counteracts the host humoral immune response by inhibiting the processing and the amidolytic activity of host PAP1 and PAP3. Thereby, melanization of host hemolymph, normally producing several reactive intermediates toxic for viruses, is deregulated and proper immune response cannot occur. This Microplitis demolitor bracovirus (isolate Webb) (MdBV) protein is Protease inhibitor Egf1.5a (O1).